Here is a 314-residue protein sequence, read N- to C-terminus: Transmembrane protein 248 (314 aa).

The helical transmembrane segment at 21–41 (VVFMISVSAMAIAFLTLGYFF) threads the bilayer. The interval 78-106 (LSNDTTTPESTMTVGQARSSTQPPQSLEE) is disordered. The segment covering 80–105 (NDTTTPESTMTVGQARSSTQPPQSLE) has biased composition (polar residues). 3 helical membrane-spanning segments follow: residues 179–199 (QAVF…PVTV), 236–258 (FWCY…TVVV), and 270–290 (LMHT…YAVI).

Belongs to the TMEM248 family.

The protein resides in the membrane. The polypeptide is Transmembrane protein 248 (Tmem248) (Mus musculus (Mouse)).